The primary structure comprises 561 residues: DISARM protein DrmB (561 aa).

It localises to the cytoplasm. Its function is as follows. Component of antiviral defense system DISARM (defense island system associated with restriction-modification), composed of DrmE, DrmA, DrmB, DrmC and DrmMII. DISARM is probably a multi-gene restriction module, this subunit has an unknown function. Expression of DISARM in B.subtilis (strain BEST7003) confers resistance to phages Nf, phi29, phi105, phi3T, SPO1, SPR and SPP1. Protection is over 10(7)-fold against phi3T, 10(4)-10(5)-fold against Nf, phi29, phi105 and SPR, 100-fold against SPO1 and 10-fold against SPP1. DISARM does not interfere with phage adsorption, but instead interferes with (phi3T) DNA replication early in its cycle, preventing replication, circularization and lysogeny and probably causes phage DNA degradation (DNA is degraded in SPP1-infected cells). The chain is DISARM protein DrmB from Bacillus paralicheniformis (strain ATCC 9945a / NCIMB 11709 / CD-2).